The primary structure comprises 395 residues: 8-amino-7-oxononanoate synthase/2-amino-3-ketobutyrate coenzyme A ligase (395 aa).

Residue G110–F111 participates in pyridoxal 5'-phosphate binding. Substrate is bound at residue H135. Pyridoxal 5'-phosphate contacts are provided by residues S182, D207–H210, and T239–K242. K242 carries the N6-(pyridoxal phosphate)lysine modification. Residue T356 coordinates substrate.

Belongs to the class-II pyridoxal-phosphate-dependent aminotransferase family. Homodimer. Pyridoxal 5'-phosphate is required as a cofactor.

The enzyme catalyses 6-carboxyhexanoyl-[ACP] + L-alanine + H(+) = (8S)-8-amino-7-oxononanoate + holo-[ACP] + CO2. It catalyses the reaction glycine + acetyl-CoA = (2S)-2-amino-3-oxobutanoate + CoA. Its pathway is cofactor biosynthesis; biotin biosynthesis. Its function is as follows. Catalyzes the decarboxylative condensation of pimeloyl-[acyl-carrier protein] and L-alanine to produce 8-amino-7-oxononanoate (AON), [acyl-carrier protein], and carbon dioxide. Can also use pimeloyl-CoA instead of pimeloyl-ACP as substrate. It also converts 2-amino-3-ketobutyrate and CoA to glycine and acetyl-CoA. Activity is also observed with the following combinations of substrates: acetyl-CoA and either L-alanine or L-serine, pimeloyl-CoA and either glycine or L-serine, and palmitoyl-CoA with L-alanine. This Thermus thermophilus (strain ATCC 27634 / DSM 579 / HB8) protein is 8-amino-7-oxononanoate synthase/2-amino-3-ketobutyrate coenzyme A ligase.